The following is a 1876-amino-acid chain: MMWKTLLCCLLAVSAAALDGWEPGKRYEYHVRGRTLTALHEVANQYSGFRFKGKLVIEPHTPSVLRGQLKDTYHMTVHRMLPDGWDQKFEERESNWERVGMKNKPFEVHVGNEFQFNKLIVTEDTPVWETNMIKGVLSQIQVNLKEVGPDPRDEQEDRLRKIFKVHESSVTGRCEVLYDITPITKFNMLPQPLVEIEEENVNVLQVMKTQNFTDCKKLPSYVHGFYNFHNVFPAQNKAGFMSRSQQTRTIVSRNKETGRFTIRSSVTFHEVVLKPELFNSQQGISVSRMNVTLEEIKSQQHIPPPRPPKDVGDLVYRYSAETGEPSQRDSAYALESNSDSSSSSSSSSSEENAANSRHRSSSSSSSSRSSEEMRDSKKHPRASTTESQPRNSRSRRSLQNSKRSINMYNDSSSSSSSSSSEEYLLPRPHIENAPNIPFMPYFVGNQGSKIGEVDPEKIVLLARTISSELQEPDTMVKKNILSRFSILTNLVRAASFSQLEEATKRLYYRVERADNGDESKLDAWKAYRDSVAQAGTPAALKMVHTWIRKEYIKDEEAAKVVAVIPHAADTPTDNYIAYFFEMVKDPVVHGEKYLNSSAVLAFSKLLRLAAVDSEAVRRYPVHVFGRMVPKNFSARVKEYIEYFANKLKNAVKDKDSHKIQVYTRALGNTGHADIIRHFEPYLVGRESVSTHERVTMVFCLDEFVKTQPSVAQYILLRLFENVGETQEIRVAALYLLMKTDVSAELFQRLAEYTKFDKNHQVVSAVQSAIRSAAKVEGPYKKETAKNAQAAVKILSSKPYDDSYSKSFILNNYRREIDVGYSRLYNQIGSRDSFMPKSVFYKLVNIIDGDRDDQAKFGGAVSSVRDVIDFIRQQFKKDDSQDELENSKYAEDDDIWDLREIANLLEMEEENVDPLEGNVHYDYFGAQRFFTLNKTSFEFREELKKYFKKPQITNINKLYNRMELKVGYPNVMGVPFFFTFKRPTLVKLTAKTFIMPLKPCDHGKPHKFPRIFNVTSDVSFVYSFDMHSHMGVVAPFNKKEYVTGIQRKHMIQIPLNVSVHVNLDKNKVAADFKPYYEDNFKVAEARGIPFTTVHDIKSLVPYVEAEHTSYIRVRPSKAYEGNFGKSVGMVYHYNFETDQQFFDYKWFSSNYFLHYPNVAFYYGWEAQPVFYYDFKLYLDSHNSPAKTVQLKASYDNRYTQPEEEEETRQHSKIRRPRSASRKHRRSRHEERAPLENLEVSDTETQREELYDIVLPAVRAGRLYYASVSVAFKGEENVYSKYEVEGALASSQVNEHISTMLRAHSNDAERKHQYAHVRVNVTMPQVPVIDYRKALEFDPTSKIQCEVHFGDTPEKKSKVYFQGKFERTDERKKFVAESDMAQLCSAQQNNKNYLLPACRNVTEEASKLDKYFFKVKYENLSEKCRNRTYKAYSYLRHYFFPYITENVYPDERKTDSVEVQVQFNEEINAVNVSVKAPILNVEFTDVRVYNKYARALFSLNPRYPLLSQVAKTAFPQYYEPTCVVDYSKVNTFDNRTYEHDMLNDWVEVMFHKPRSKIYKQVSVSAKQAHSKMVLKVLRGDEVKFEMKQPRDSSSSPELKMNDKVIEYERSPAFIHYKHELIAVAYALPSKALHLDLLNDSLVFVYDGERVMLHAGNHYRNQVRGLCGTFDGEPSTDFKAPQNCHVRDVEDLILAYTLVRDLDRSRLRDENICVREDVQLVNLTNHRHAEKSGIRPYDIDDDSSSSSSSSSSSSSSSSSSKSNSTSSSSSESNESALPRGENKLHRAQQPSRNCHMHLHRIVTHNGKQCISKLALTECAPLCREESHTTKTEAFVCFPPGPTADHYTKLVRKGVSPDFSRKTDIVNLRVTIPSRCVSKI.

A signal peptide spans 1–16 (MMWKTLLCCLLAVSAA). Residues 21-838 (WEPGKRYEYH…SRDSFMPKSV (818 aa)) form the Vitellogenin domain. Asn211 and Asn290 each carry an N-linked (GlcNAc...) asparagine glycan. The segment at 322–424 (TGEPSQRDSA…SSSSSSEEYL (103 aa)) is disordered. Composition is skewed to low complexity over residues 330-368 (SAYA…SSSR) and 387-404 (SQPR…SKRS). A glycan (N-linked (GlcNAc...) asparagine) is linked at Asn409. Over residues 411–420 (SSSSSSSSSS) the composition is skewed to low complexity. 5 N-linked (GlcNAc...) asparagine glycosylation sites follow: Asn595, Asn631, Asn932, Asn1012, and Asn1055. The tract at residues 1192-1239 (SYDNRYTQPEEEEETRQHSKIRRPRSASRKHRRSRHEERAPLENLEVS) is disordered. Residues 1209-1225 (HSKIRRPRSASRKHRRS) show a composition bias toward basic residues. N-linked (GlcNAc...) asparagine glycans are attached at residues Asn1318, Asn1398, Asn1417, Asn1424, Asn1469, Asn1532, Asn1636, Asn1719, Asn1760, and Asn1770. The 186-residue stretch at 1518-1703 (PTCVVDYSKV…TLVRDLDRSR (186 aa)) folds into the VWFD domain. A disulfide bond links Cys1520 and Cys1664. The interval 1729-1788 (SGIRPYDIDDDSSSSSSSSSSSSSSSSSSKSNSTSSSSSESNESALPRGENKLHRAQQPS) is disordered. The span at 1741–1772 (SSSSSSSSSSSSSSSSSKSNSTSSSSSESNES) shows a compositional bias: low complexity.

It is found in the secreted. Precursor of the egg-yolk proteins that are sources of nutrients during embryonic development. This chain is Vitellogenin-2 (VG2), found in Periplaneta americana (American cockroach).